The primary structure comprises 565 residues: Sulfite reductase [NADPH] hemoprotein beta-component (565 aa).

Positions 429, 435, 474, and 478 each coordinate [4Fe-4S] cluster. Cys478 contributes to the siroheme binding site.

Belongs to the nitrite and sulfite reductase 4Fe-4S domain family. Alpha(8)-beta(8). The alpha component is a flavoprotein, the beta component is a hemoprotein. The cofactor is siroheme. Requires [4Fe-4S] cluster as cofactor.

The catalysed reaction is hydrogen sulfide + 3 NADP(+) + 3 H2O = sulfite + 3 NADPH + 4 H(+). It functions in the pathway sulfur metabolism; hydrogen sulfide biosynthesis; hydrogen sulfide from sulfite (NADPH route): step 1/1. Its function is as follows. Component of the sulfite reductase complex that catalyzes the 6-electron reduction of sulfite to sulfide. This is one of several activities required for the biosynthesis of L-cysteine from sulfate. The polypeptide is Sulfite reductase [NADPH] hemoprotein beta-component (Shewanella baltica (strain OS185)).